The primary structure comprises 327 residues: MQGKVALEEHFAIPETLQDSAGFVPGDYWKELQHRLLDIQDTRLKLMDAHGIETMILSLNAPAVQAIPDRKKAIEIARRANDVLAEECARRPDRFLAFAALPLQDPDAATQELQRCVNDLGFVGALVNGFSQEGDGQTPLYYDLPQYRPFWGEVEKLDVPFYLHPRNPLPQDSRIYDGHPWLLGPTWAFAQETAVHALRLMASGLFDAHPRLNIILGHMGEGLPYMMWRIDHRNAWVKLPPRYPAKRRFVDYFNENFHITTSGNFRTQTLIDAILEIGADRILFSTDWPFENIDHASDWFNATTIAEADRVKIGRTNARRLFKLDGR.

Zn(2+)-binding residues include Glu8, His10, His164, and Asp287. Asp287 is an active-site residue.

The protein belongs to the metallo-dependent hydrolases superfamily. ACMSD family. As to quaternary structure, homotetramer. Zn(2+) serves as cofactor.

The enzyme catalyses 2,6-dihydroxybenzoate + H(+) = resorcinol + CO2. The catalysed reaction is 2,3-dihydroxybenzoate + H(+) = catechol + CO2. It functions in the pathway aromatic compound metabolism. With respect to regulation, insensitive to oxygen. Decarboxylation and carboxylation are inhibited by AgNO(3) and by diethyl pyrocarbonate, a histidine residue-specific inhibitor. Decarboxylation is also inhibited by HgCl(2) and activated by MgCl(2). Involved in the gamma-resorcylate (2,6-dihydroxybenzoate) catabolism. Catalyzes the reversible decarboxylation of gamma-resorcylate to resorcinol. Also catalyzes the decarboxylation of 2,3-dihydroxybenzoate to catechol, but does not act on 2-hydroxybenzoic acid 3-hydroxybenzoic acid, 4-hydroxybenzoic acid, 3,4-dihydroxybenzoic acid, 2,5-dihydroxybenzoic acid, 2,3,4-trihydroxybenzoic acid, 3,4,5-trihydroxybenzoic acid, 4-aminobenzoic acid, o-hydroxyphenylacetic acid and vanillic acid. Resorcinol and catechol can both be carboxylated by the reverse reaction. The chain is Gamma-resorcylate decarboxylase from Rhizobium radiobacter (Agrobacterium tumefaciens).